The primary structure comprises 407 residues: MDIILGVVMFTLIVLALVLVILFAKSKLVPTGDITISINGDADKSIVTNPGGKLLSVLAGSGVFVSSACGGGGSCGQCRVKVKSGGGDILPTELDHITKGEAREGERLACQVAVKTDMDIELPEEIFGVKKWECTVISNDNKATFIKELKLQIPDGESVPFRAGGYIQIEAPAHHIKYSDFDVPEEYRGDWDKFNLFRYESKVDEDIIRAYSMANYPEEFGIIMLNVRIATPPPNNPNVPPGQMSSYIWSLKEGDKCTISGPFGEFFAKDTDAEMVFIGGGAGMAPMRSHIFDQLKRLKSTRKMSYWYGARSKREMFYVEDFDGLAAENSNFVWHCALSDPMPEDNWDGYTGFIHNVLYENYLKDHEAPEDCEYYMCGPPMMNAAVIGMLKNLGVEDENILLDDFGG.

Residues 3–23 (IILGVVMFTLIVLALVLVILF) form a helical membrane-spanning segment. The 2Fe-2S ferredoxin-type domain occupies 32–126 (GDITISINGD…DMDIELPEEI (95 aa)). [2Fe-2S] cluster contacts are provided by C69, C75, C78, and C110. The 141-residue stretch at 129-269 (VKKWECTVIS…SGPFGEFFAK (141 aa)) folds into the FAD-binding FR-type domain. The tract at residues 272-389 (DAEMVFIGGG…PMMNAAVIGM (118 aa)) is catalytic.

Belongs to the NqrF family. As to quaternary structure, composed of six subunits; NqrA, NqrB, NqrC, NqrD, NqrE and NqrF. The cofactor is [2Fe-2S] cluster. FAD is required as a cofactor.

The protein resides in the cell inner membrane. It catalyses the reaction a ubiquinone + n Na(+)(in) + NADH + H(+) = a ubiquinol + n Na(+)(out) + NAD(+). In terms of biological role, NQR complex catalyzes the reduction of ubiquinone-1 to ubiquinol by two successive reactions, coupled with the transport of Na(+) ions from the cytoplasm to the periplasm. The first step is catalyzed by NqrF, which accepts electrons from NADH and reduces ubiquinone-1 to ubisemiquinone by a one-electron transfer pathway. The sequence is that of Na(+)-translocating NADH-quinone reductase subunit F from Vibrio anguillarum (Listonella anguillarum).